A 605-amino-acid chain; its full sequence is MAQAKKSVDIKNIRNFSIIAHIDHGKSTLADRFIQMCGGLQDREMQAQVLDSMELERERGITIKAASVTLYYTHPNGQEYQLNFIDTPGHVDFSYEVSRSLAACEGALLVVDAAQGVEAQSVANCYTAIEQGLEVLPILNKIDLPQAEPERVIHEIEEIIGIEATNAPTCSAKTGLGVEGVLETLVDVIPAPTGDREAPLQALIIDSWFDNYLGVVSLVRIKDGRIRKGDKMLVKSTGQTHIVTSVGVFNPKHTETGVLEAGEVGFVIAGIKDIFGAPVGDTITLSTTPEVASLPGFKKVKPQVYAGLFPIDASDFEPFREALQKLQINDSALFFEPESSDALGFGFRCGFLGMLHMEIVQERLEREYDLDLISSAPTVVYEAVTKKGDTIYIDSPSKMPDGSVVEDLREPIAECHILVPQEYLGNVMTLCIERRGVQKDMKFLGNQVSITFEIPMAEVVMDFFDKLKSCSRGFASLDYNFIRFESSSLVKVDVLINGEKVDALAMICHRNDARHRGIALVEKMKDLIPRQMFDVAIQAAIGAQIIARSTVKAMRKNVLAKCYGGDVSRKKKLLAKQKEGKKRMKQVGSVEIPQEAFLAVLKVER.

In terms of domain architecture, tr-type G spans 11–193 (KNIRNFSIIA…TLVDVIPAPT (183 aa)). Residues 23 to 28 (DHGKST) and 140 to 143 (NKID) each bind GTP.

This sequence belongs to the TRAFAC class translation factor GTPase superfamily. Classic translation factor GTPase family. LepA subfamily.

It localises to the cell inner membrane. The catalysed reaction is GTP + H2O = GDP + phosphate + H(+). Required for accurate and efficient protein synthesis under certain stress conditions. May act as a fidelity factor of the translation reaction, by catalyzing a one-codon backward translocation of tRNAs on improperly translocated ribosomes. Back-translocation proceeds from a post-translocation (POST) complex to a pre-translocation (PRE) complex, thus giving elongation factor G a second chance to translocate the tRNAs correctly. Binds to ribosomes in a GTP-dependent manner. The polypeptide is Elongation factor 4 (Acinetobacter baumannii (strain AB307-0294)).